The chain runs to 181 residues: TATA-box-binding protein (181 aa).

Repeat copies occupy residues 8-84 and 99-175.

This sequence belongs to the TBP family.

General factor that plays a role in the activation of archaeal genes transcribed by RNA polymerase. Binds specifically to the TATA box promoter element which lies close to the position of transcription initiation. The chain is TATA-box-binding protein from Methanobrevibacter smithii (strain ATCC 35061 / DSM 861 / OCM 144 / PS).